We begin with the raw amino-acid sequence, 293 residues long: Ribosomal protein L11 methyltransferase (293 aa).

Residues Thr144, Gly165, Asp187, and Asn228 each contribute to the S-adenosyl-L-methionine site.

The protein belongs to the methyltransferase superfamily. PrmA family.

Its subcellular location is the cytoplasm. The enzyme catalyses L-lysyl-[protein] + 3 S-adenosyl-L-methionine = N(6),N(6),N(6)-trimethyl-L-lysyl-[protein] + 3 S-adenosyl-L-homocysteine + 3 H(+). Its function is as follows. Methylates ribosomal protein L11. This chain is Ribosomal protein L11 methyltransferase, found in Methylococcus capsulatus (strain ATCC 33009 / NCIMB 11132 / Bath).